Here is an 86-residue protein sequence, read N- to C-terminus: Short neurotoxin homolog NTL4 (86 aa).

The first 21 residues, 1–21 (MKTLLLTLVVVTIICLDLGYT), serve as a signal peptide directing secretion. 4 disulfide bridges follow: Cys-24-Cys-45, Cys-38-Cys-63, Cys-67-Cys-78, and Cys-79-Cys-84.

This sequence belongs to the three-finger toxin family. Short-chain subfamily. Orphan group III sub-subfamily. Expressed by the venom gland.

It is found in the secreted. The polypeptide is Short neurotoxin homolog NTL4 (Bungarus multicinctus (Many-banded krait)).